Consider the following 643-residue polypeptide: Clathrin interactor 1 (643 aa).

An ENTH domain is found at 16–149; sequence NVVMNYSEIE…QDDDRLREER (134 aa). R29 serves as a coordination point for a 1,2-diacyl-sn-glycero-3-phospho-(1D-myo-inositol-4,5-bisphosphate). Residues 52–54 are interaction with VTI1B; the sequence is FMY. R67 is an a 1,2-diacyl-sn-glycero-3-phospho-(1D-myo-inositol-4,5-bisphosphate) binding site. Interaction with VTI1B regions lie at residues 94–96 and 142–153; these read SER and DDRLREERKKAK. Phosphoserine occurs at positions 163, 166, 173, 205, 210, 227, 245, and 299. Residues 219-331 are disordered; sequence FRRKDREDSP…SSGDLVDLFD (113 aa). A compositionally biased stretch (basic and acidic residues) spans 222-239; the sequence is KDREDSPERCSDSDEEKK. The segment covering 300 to 310 has biased composition (polar residues); the sequence is PDQNASTHTPQ. Position 308 is a phosphothreonine (T308). The segment covering 311-323 has biased composition (low complexity); the sequence is SSLKTSVPSSKSS. Residues S312 and S642 each carry the phosphoserine modification.

Belongs to the epsin family. In terms of assembly, binds clathrin heavy chain and AP-2. Interacts with VTI1B. Interacts with GGA2 (via GAE domain). Interacts with AP1G1 (via GAE domain). Interacts with AP1G2 (via GAE domain).

It localises to the cytoplasm. The protein localises to the perinuclear region. The protein resides in the membrane. Its subcellular location is the cytoplasmic vesicle. It is found in the clathrin-coated vesicle. Its function is as follows. Binds to membranes enriched in phosphatidylinositol 4,5-bisphosphate (PtdIns(4,5)P2). May have a role in transport via clathrin-coated vesicles from the trans-Golgi network to endosomes. Stimulates clathrin assembly. This chain is Clathrin interactor 1 (CLINT1), found in Bos taurus (Bovine).